Consider the following 417-residue polypeptide: Serine hydroxymethyltransferase (417 aa).

(6S)-5,6,7,8-tetrahydrofolate-binding positions include leucine 121 and 125–127 (GHL). N6-(pyridoxal phosphate)lysine is present on lysine 229. 355 to 357 (SPF) is a binding site for (6S)-5,6,7,8-tetrahydrofolate.

It belongs to the SHMT family. Homodimer. Requires pyridoxal 5'-phosphate as cofactor.

The protein resides in the cytoplasm. It carries out the reaction (6R)-5,10-methylene-5,6,7,8-tetrahydrofolate + glycine + H2O = (6S)-5,6,7,8-tetrahydrofolate + L-serine. The protein operates within one-carbon metabolism; tetrahydrofolate interconversion. Its pathway is amino-acid biosynthesis; glycine biosynthesis; glycine from L-serine: step 1/1. Its function is as follows. Catalyzes the reversible interconversion of serine and glycine with tetrahydrofolate (THF) serving as the one-carbon carrier. This reaction serves as the major source of one-carbon groups required for the biosynthesis of purines, thymidylate, methionine, and other important biomolecules. Also exhibits THF-independent aldolase activity toward beta-hydroxyamino acids, producing glycine and aldehydes, via a retro-aldol mechanism. The chain is Serine hydroxymethyltransferase from Shewanella frigidimarina (strain NCIMB 400).